The chain runs to 158 residues: Ribosome maturation factor RimP (158 aa).

Belongs to the RimP family.

It localises to the cytoplasm. In terms of biological role, required for maturation of 30S ribosomal subunits. The polypeptide is Ribosome maturation factor RimP (Pseudomonas fluorescens (strain SBW25)).